Reading from the N-terminus, the 393-residue chain is NADH-quinone oxidoreductase subunit D (393 aa).

The protein belongs to the complex I 49 kDa subunit family. NDH-1 is composed of 14 different subunits. Subunits NuoB, C, D, E, F, and G constitute the peripheral sector of the complex.

It is found in the cell inner membrane. It catalyses the reaction a quinone + NADH + 5 H(+)(in) = a quinol + NAD(+) + 4 H(+)(out). NDH-1 shuttles electrons from NADH, via FMN and iron-sulfur (Fe-S) centers, to quinones in the respiratory chain. The immediate electron acceptor for the enzyme in this species is believed to be ubiquinone. Couples the redox reaction to proton translocation (for every two electrons transferred, four hydrogen ions are translocated across the cytoplasmic membrane), and thus conserves the redox energy in a proton gradient. This Ehrlichia canis (strain Jake) protein is NADH-quinone oxidoreductase subunit D.